A 129-amino-acid polypeptide reads, in one-letter code: Large ribosomal subunit protein eL31 (129 aa).

A disordered region spans residues 1 to 46 (MSQETTATKQEEQKTSELQQQKKEEQKPQQATTTTKEEKKTKPEKE). Composition is skewed to basic and acidic residues over residues 9–27 (KQEEQKTSELQQQKKEEQK) and 35–46 (TKEEKKTKPEKE).

Belongs to the eukaryotic ribosomal protein eL31 family.

The polypeptide is Large ribosomal subunit protein eL31 (rpl31e) (Sulfolobus acidocaldarius (strain ATCC 33909 / DSM 639 / JCM 8929 / NBRC 15157 / NCIMB 11770)).